Consider the following 399-residue polypeptide: Phosphomevalonate dehydratase large subunit (399 aa).

(R)-5-phosphomevalonate is bound by residues glycine 54, valine 55, serine 56, asparagine 85, and proline 86. [4Fe-4S] cluster is bound at residue cysteine 125. Glutamate 144 and serine 145 together coordinate (R)-5-phosphomevalonate. Positions 298 and 355 each coordinate [4Fe-4S] cluster. Lysine 375 contacts (R)-5-phosphomevalonate.

The protein belongs to the AcnX type II large subunit family. In terms of assembly, heterodimer composed of a large subunit (PMDh-L) and a small subunit (PMDh-S). [4Fe-4S] cluster serves as cofactor.

The enzyme catalyses (R)-5-phosphomevalonate = (2E)-3-methyl-5-phosphooxypent-2-enoate + H2O. Its pathway is isoprenoid biosynthesis; isopentenyl diphosphate biosynthesis via mevalonate pathway. Functionally, component of a hydro-lyase that catalyzes the dehydration of mevalonate 5-phosphate (MVA5P) to form trans-anhydromevalonate 5-phosphate (tAHMP). Involved in the archaeal mevalonate (MVA) pathway, which provides fundamental precursors for isoprenoid biosynthesis, such as isopentenyl diphosphate (IPP) and dimethylallyl diphosphate (DMAPP). This Methanothermobacter thermautotrophicus (strain ATCC 29096 / DSM 1053 / JCM 10044 / NBRC 100330 / Delta H) (Methanobacterium thermoautotrophicum) protein is Phosphomevalonate dehydratase large subunit.